The primary structure comprises 122 residues: MIQTESRLQVADNTGASEVLCIKVLGGSERRYASIGDVIKVSVKSAAPRGRVKKGDIYNAVVVRTAKGVRRPDGSLIKFDGNAAVLLNAKLEPIGTRIFGPVTRELRTEKFMKIVSLAPEVI.

It belongs to the universal ribosomal protein uL14 family. In terms of assembly, part of the 50S ribosomal subunit. Forms a cluster with proteins L3 and L19. In the 70S ribosome, L14 and L19 interact and together make contacts with the 16S rRNA in bridges B5 and B8.

In terms of biological role, binds to 23S rRNA. Forms part of two intersubunit bridges in the 70S ribosome. This Polynucleobacter necessarius subsp. necessarius (strain STIR1) protein is Large ribosomal subunit protein uL14.